Here is a 345-residue protein sequence, read N- to C-terminus: Phosphoribosylformylglycinamidine cyclo-ligase (345 aa).

Belongs to the AIR synthase family.

Its subcellular location is the cytoplasm. It catalyses the reaction 2-formamido-N(1)-(5-O-phospho-beta-D-ribosyl)acetamidine + ATP = 5-amino-1-(5-phospho-beta-D-ribosyl)imidazole + ADP + phosphate + H(+). The protein operates within purine metabolism; IMP biosynthesis via de novo pathway; 5-amino-1-(5-phospho-D-ribosyl)imidazole from N(2)-formyl-N(1)-(5-phospho-D-ribosyl)glycinamide: step 2/2. This is Phosphoribosylformylglycinamidine cyclo-ligase from Synechococcus sp. (strain CC9902).